The sequence spans 157 residues: Ribosome maturation factor RimP (157 aa).

This sequence belongs to the RimP family.

The protein localises to the cytoplasm. Required for maturation of 30S ribosomal subunits. The protein is Ribosome maturation factor RimP of Bacillus pumilus (strain SAFR-032).